The chain runs to 334 residues: Heme A synthase (334 aa).

Transmembrane regions (helical) follow at residues 6-26 (ITRW…IGGI), 93-113 (GRIT…QGVI), 119-139 (LPYI…WYMV), 154-174 (LAFH…QLIK), and 189-209 (LIFS…GALV). H253 serves as a coordination point for heme. 3 helical membrane passes run 255–275 (LGGF…FKVK), 282–302 (IAYF…ITIV), and 305–325 (VPII…SIII). Position 313 (H313) interacts with heme.

The protein belongs to the COX15/CtaA family. Type 2 subfamily. Interacts with CtaB. Requires heme b as cofactor.

Its subcellular location is the cell membrane. The catalysed reaction is Fe(II)-heme o + 2 A + H2O = Fe(II)-heme a + 2 AH2. It functions in the pathway porphyrin-containing compound metabolism; heme A biosynthesis; heme A from heme O: step 1/1. Functionally, catalyzes the conversion of heme O to heme A by two successive hydroxylations of the methyl group at C8. The first hydroxylation forms heme I, the second hydroxylation results in an unstable dihydroxymethyl group, which spontaneously dehydrates, resulting in the formyl group of heme A. The chain is Heme A synthase from Rickettsia prowazekii (strain Madrid E).